Reading from the N-terminus, the 361-residue chain is D-alanine--D-alanine ligase (361 aa).

The region spanning 149–353 (KKLMAAEGLP…YEELLDVLVQ (205 aa)) is the ATP-grasp domain. Residue 176–231 (KKLLGLPVFVKPARGGSSIGISKVSRWEDLPAAVDLARQHDEKVIVESEIVGPEVE) coordinates ATP. Mg(2+)-binding residues include aspartate 308, glutamate 320, and asparagine 322.

It belongs to the D-alanine--D-alanine ligase family. The cofactor is Mg(2+). It depends on Mn(2+) as a cofactor.

It localises to the cytoplasm. It carries out the reaction 2 D-alanine + ATP = D-alanyl-D-alanine + ADP + phosphate + H(+). It functions in the pathway cell wall biogenesis; peptidoglycan biosynthesis. Its function is as follows. Cell wall formation. The polypeptide is D-alanine--D-alanine ligase (Corynebacterium efficiens (strain DSM 44549 / YS-314 / AJ 12310 / JCM 11189 / NBRC 100395)).